A 144-amino-acid polypeptide reads, in one-letter code: Transcription antitermination protein NusB (144 aa).

Belongs to the NusB family.

In terms of biological role, involved in transcription antitermination. Required for transcription of ribosomal RNA (rRNA) genes. Binds specifically to the boxA antiterminator sequence of the ribosomal RNA (rrn) operons. This is Transcription antitermination protein NusB from Paraburkholderia phytofirmans (strain DSM 17436 / LMG 22146 / PsJN) (Burkholderia phytofirmans).